A 109-amino-acid polypeptide reads, in one-letter code: Photosystem II reaction center Psb28 protein (109 aa).

The protein belongs to the Psb28 family. In terms of assembly, part of the photosystem II complex.

It is found in the plastid. The protein localises to the chloroplast thylakoid membrane. This chain is Photosystem II reaction center Psb28 protein, found in Cyanidioschyzon merolae (strain NIES-3377 / 10D) (Unicellular red alga).